The following is a 277-amino-acid chain: Xyloglucan endotransglucosylase/hydrolase protein 19 (277 aa).

The first 21 residues, 1–21 (MKSFTFLILFLFAAQSISVYA), serve as a signal peptide directing secretion. Positions 22–213 (GSFHKDVKIH…WSKAPFTAYY (192 aa)) constitute a GH16 domain. The Nucleophile role is filled by Glu-99. The active-site Proton donor is the Glu-103. Glu-103 lines the xyloglucan pocket. A glycan (N-linked (GlcNAc...) asparagine) is linked at Asn-107. Residues 116-118 (HTN), 126-128 (DKE), 192-193 (HW), and Gly-197 contribute to the xyloglucan site. 2 disulfides stabilise this stretch: Cys-221–Cys-230 and Cys-262–Cys-276. Arg-267 contacts xyloglucan.

It belongs to the glycosyl hydrolase 16 family. XTH group 2 subfamily. Contains at least one intrachain disulfide bond essential for its enzymatic activity. As to expression, root specific.

It is found in the secreted. The protein resides in the cell wall. It localises to the extracellular space. Its subcellular location is the apoplast. It catalyses the reaction breaks a beta-(1-&gt;4) bond in the backbone of a xyloglucan and transfers the xyloglucanyl segment on to O-4 of the non-reducing terminal glucose residue of an acceptor, which can be a xyloglucan or an oligosaccharide of xyloglucan.. Its function is as follows. Possesses xyloglucan endotransglucosylase (XET) activity in vitro. Does not possess xyloglucan endohydrolysis (XEH) activity. Cleaves and religates xyloglucan polymers, an essential constituent of the primary cell wall, and thereby participates in cell wall construction of growing tissues. Involved in cell proliferation in the tissue reunion process of wounded inflorescence stems. Maybe a downstream target of NAC071 as a consequence of auxin action in wounded stems. This chain is Xyloglucan endotransglucosylase/hydrolase protein 19, found in Arabidopsis thaliana (Mouse-ear cress).